The primary structure comprises 204 residues: Viral interleukin-6 homolog (204 aa).

The N-terminal stretch at 1 to 22 is a signal peptide; that stretch reads MRWFKLWSILLVGSLLVSGTRG.

Belongs to the IL-6 superfamily. In terms of assembly, interacts with host IL6ST.

Its function is as follows. Initiates signal transduction through binding to interleukin-6 receptor subunit beta IL6ST, independently of the cognate IL6 receptor IL6R. In infected primary effusion lymphoma cells, promotes proliferation of cells, protects them from apoptosis, and promotes immune evasion of interferon activity. Also drives blood to lymphatic endothelial cell differentiation. The chain is Viral interleukin-6 homolog (K2) from Homo sapiens (Human).